Consider the following 141-residue polypeptide: Hemoglobin subunit alpha-A (141 aa).

Positions M1–R141 constitute a Globin domain. H58 is an O2 binding site. H87 serves as a coordination point for heme b.

It belongs to the globin family. As to quaternary structure, there are three forms of hemoglobin in Sphenodon: A, A' and D. Hb A is a tetramer of two alpha-A and two beta-1, Hb A' is a tetramer of two alpha-a and two beta-2, Hb D is a tetramer of two alpha-D and two beta-2. As to expression, red blood cells.

Functionally, involved in oxygen transport from the lung to the various peripheral tissues. In Sphenodon punctatus (Tuatara), this protein is Hemoglobin subunit alpha-A (HBAA).